The sequence spans 154 residues: 6,7-dimethyl-8-ribityllumazine synthase (154 aa).

5-amino-6-(D-ribitylamino)uracil-binding positions include phenylalanine 22, 56–58, and 80–82; these read AFE and AVI. Residue 85-86 participates in (2S)-2-hydroxy-3-oxobutyl phosphate binding; it reads AT. Histidine 88 (proton donor) is an active-site residue. Residue phenylalanine 113 coordinates 5-amino-6-(D-ribitylamino)uracil. Arginine 127 is a (2S)-2-hydroxy-3-oxobutyl phosphate binding site.

Belongs to the DMRL synthase family.

It catalyses the reaction (2S)-2-hydroxy-3-oxobutyl phosphate + 5-amino-6-(D-ribitylamino)uracil = 6,7-dimethyl-8-(1-D-ribityl)lumazine + phosphate + 2 H2O + H(+). It participates in cofactor biosynthesis; riboflavin biosynthesis; riboflavin from 2-hydroxy-3-oxobutyl phosphate and 5-amino-6-(D-ribitylamino)uracil: step 1/2. Its function is as follows. Catalyzes the formation of 6,7-dimethyl-8-ribityllumazine by condensation of 5-amino-6-(D-ribitylamino)uracil with 3,4-dihydroxy-2-butanone 4-phosphate. This is the penultimate step in the biosynthesis of riboflavin. This Desulfitobacterium hafniense (strain DSM 10664 / DCB-2) protein is 6,7-dimethyl-8-ribityllumazine synthase.